A 520-amino-acid chain; its full sequence is Cholesterol side-chain cleavage enzyme, mitochondrial (520 aa).

Residues 1-39 (MLARGLPLRSALVKACPPILSTVGEGWGHHRVGTGEGAG) constitute a mitochondrion transit peptide. C461 contacts heme.

It belongs to the cytochrome P450 family. In terms of assembly, interacts with FDX1/adrenodoxin. It depends on heme as a cofactor. As to expression, detected in adrenal cortex and corpus luteum (at protein level).

The protein resides in the mitochondrion inner membrane. It catalyses the reaction 6 reduced [adrenodoxin] + cholesterol + 3 O2 + 6 H(+) = 4-methylpentanal + pregnenolone + 6 oxidized [adrenodoxin] + 4 H2O. The enzyme catalyses 2 reduced [adrenodoxin] + cholesterol + O2 + 2 H(+) = (22R)-hydroxycholesterol + 2 oxidized [adrenodoxin] + H2O. The catalysed reaction is (22R)-hydroxycholesterol + 2 reduced [adrenodoxin] + O2 + 2 H(+) = (20R,22R)-20,22-dihydroxycholesterol + 2 oxidized [adrenodoxin] + H2O. It carries out the reaction (20R,22R)-20,22-dihydroxycholesterol + 2 reduced [adrenodoxin] + O2 + 2 H(+) = 4-methylpentanal + pregnenolone + 2 oxidized [adrenodoxin] + 2 H2O. The protein operates within lipid metabolism; C21-steroid hormone metabolism. Its pathway is steroid metabolism; cholesterol metabolism. A cytochrome P450 monooxygenase that catalyzes the side-chain hydroxylation and cleavage of cholesterol to pregnenolone, the precursor of most steroid hormones. Catalyzes three sequential oxidation reactions of cholesterol, namely the hydroxylation at C22 followed with the hydroxylation at C20 to yield 20R,22R-hydroxycholesterol that is further cleaved between C20 and C22 to yield the C21-steroid pregnenolone and 4-methylpentanal. Mechanistically, uses molecular oxygen inserting one oxygen atom into a substrate and reducing the second into a water molecule. Two electrons are provided by NADPH via a two-protein mitochondrial transfer system comprising flavoprotein FDXR (adrenodoxin/ferredoxin reductase) and nonheme iron-sulfur protein FDX1 or FDX2 (adrenodoxin/ferredoxin). This chain is Cholesterol side-chain cleavage enzyme, mitochondrial (CYP11A1), found in Bos taurus (Bovine).